A 257-amino-acid chain; its full sequence is Probable oxidoreductase yanE (257 aa).

It belongs to the oxidoreductase OpS7 family.

It participates in secondary metabolite biosynthesis; terpenoid biosynthesis. In terms of biological role, part of the gene cluster that mediates the biosynthesis of yanuthone D, a fungal isoprenoid epoxycyclohexenone that acts as an antibiotic against fungi and bacteria. The first step of the pathway is the synthesis of 6-methylsalicylic acid (6-MSA) by the polyketide synthase yanA. 6-MSA is then converted to m-cresol by the decarboxylase yanB. The cytochrome P450 monooxygenase yanC then catalyzes the oxidation of m-cresol to toluquinol. Epoxidation of toluquinol is then performed by the short chain dehydrogenase yanD, with the help of yanE, and a further prenylation by yanG leads to 7-deacetoxyyanuthone A. The next step is the hydroxylation of C-22 of 7-deacetoxyyanuthone A by the cytochrome P450 monooxygenase yanH to yield 22-deacetylyanuthone A. O-Mevalon transferase yanI then attaches mevalon to the hydroxyl group of 22-deacetylyanuthone A to produce yanuthone E. Finally, the FAD-dependent monooxygenase yanF oxidizes the hydroxyl group at C15 of yanuthone E to form yanuthone D. Furthermore, several branching points in the pathway lead to the production of yanuthones F and G from 7-deacetoxyyanuthone A; yanuthones H and I from 22-deacetylyanuthone A; and yanuthone J from yanuthone E. YanE is also involved in the synthesis of yanuthone X1 which does not have 6-methylsalicylic acid (6-MSA) as precursor. The protein is Probable oxidoreductase yanE of Aspergillus niger (strain ATCC 1015 / CBS 113.46 / FGSC A1144 / LSHB Ac4 / NCTC 3858a / NRRL 328 / USDA 3528.7).